The primary structure comprises 154 residues: Urease subunit alpha (154 aa).

The Urease domain maps to 38 to 154 (GGIDTHIHFI…ADEMDIQVAI (117 aa)). Residues His43, His45, and Lys126 each coordinate Ni(2+). Lys126 bears the N6-carboxylysine mark. His128 is a substrate binding site.

The protein belongs to the metallo-dependent hydrolases superfamily. Urease alpha subunit family. In terms of assembly, heterotrimer of UreA (gamma), UreB (beta) and UreC (alpha) subunits. Three heterotrimers associate to form the active enzyme. Ni cation serves as cofactor. Post-translationally, carboxylation allows a single lysine to coordinate two nickel ions.

It is found in the cytoplasm. It catalyses the reaction urea + 2 H2O + H(+) = hydrogencarbonate + 2 NH4(+). Its pathway is nitrogen metabolism; urea degradation; CO(2) and NH(3) from urea (urease route): step 1/1. The protein is Urease subunit alpha (ureC) of Photobacterium damselae subsp. damselae (Listonella damsela).